We begin with the raw amino-acid sequence, 334 residues long: Tryptophan--tRNA ligase (334 aa).

ATP-binding positions include 11 to 13 and 19 to 20; these read QPT and GN. Positions 12 to 20 match the 'HIGH' region motif; that stretch reads PTGKLTIGN. Asp-135 contacts L-tryptophan. ATP contacts are provided by residues 147–149, Ile-186, and 195–199; these read GED and KMSKS. Residues 195-199 carry the 'KMSKS' region motif; that stretch reads KMSKS.

Belongs to the class-I aminoacyl-tRNA synthetase family. Homodimer.

Its subcellular location is the cytoplasm. The catalysed reaction is tRNA(Trp) + L-tryptophan + ATP = L-tryptophyl-tRNA(Trp) + AMP + diphosphate + H(+). In terms of biological role, catalyzes the attachment of tryptophan to tRNA(Trp). The chain is Tryptophan--tRNA ligase from Blochmanniella floridana.